A 982-amino-acid chain; its full sequence is Coatomer subunit beta (982 aa).

HEAT repeat units lie at residues 16–53, 130–167, 241–278, and 317–352; these read SGAP…NGEP, ELVE…RFPE, YDKG…SPTA, and LQDS…NQNS.

As to quaternary structure, oligomeric complex that consists of at least the alpha, beta, beta', gamma, delta, epsilon and zeta subunits.

The protein resides in the cytoplasm. The protein localises to the golgi apparatus membrane. It is found in the cytoplasmic vesicle. Its subcellular location is the COPI-coated vesicle membrane. Functionally, the coatomer is a cytosolic protein complex that binds to dilysine motifs and reversibly associates with Golgi non-clathrin-coated vesicles, which further mediate biosynthetic protein transport from the ER, via the Golgi up to the trans Golgi network. Coatomer complex is required for budding from Golgi membranes, and is essential for the retrograde Golgi-to-ER transport of dilysine-tagged proteins. In Trypanosoma brucei brucei, this protein is Coatomer subunit beta.